The primary structure comprises 394 residues: Elongation factor Tu (394 aa).

The region spanning 10–204 (KPHVNIGTIG…AVDSYIPQPV (195 aa)) is the tr-type G domain. The G1 stretch occupies residues 19–26 (GHVDHGKT). 19–26 (GHVDHGKT) contacts GTP. T26 is a binding site for Mg(2+). The G2 stretch occupies residues 60–64 (GITIS). Residues 81-84 (DCPG) form a G3 region. Residues 81-85 (DCPGH) and 136-139 (NKVD) contribute to the GTP site. Residues 136–139 (NKVD) are G4. Positions 174–176 (SAL) are G5.

Belongs to the TRAFAC class translation factor GTPase superfamily. Classic translation factor GTPase family. EF-Tu/EF-1A subfamily. Monomer.

It localises to the cytoplasm. The catalysed reaction is GTP + H2O = GDP + phosphate + H(+). Functionally, GTP hydrolase that promotes the GTP-dependent binding of aminoacyl-tRNA to the A-site of ribosomes during protein biosynthesis. The chain is Elongation factor Tu from Rickettsia massiliae (strain Mtu5).